We begin with the raw amino-acid sequence, 125 residues long: Small ribosomal subunit protein eS26 (125 aa).

It belongs to the eukaryotic ribosomal protein eS26 family.

The polypeptide is Small ribosomal subunit protein eS26 (RPS26) (Sterkiella nova (Ciliate)).